A 168-amino-acid chain; its full sequence is Phosphopantetheine adenylyltransferase (168 aa).

Substrate is bound at residue T10. Residues 10 to 11 (TF) and H18 each bind ATP. Residues K42, L74, and R88 each contribute to the substrate site. ATP contacts are provided by residues 89–91 (GLR), E99, and 124–130 (NSFISST).

It belongs to the bacterial CoaD family. In terms of assembly, homohexamer. The cofactor is Mg(2+).

Its subcellular location is the cytoplasm. The enzyme catalyses (R)-4'-phosphopantetheine + ATP + H(+) = 3'-dephospho-CoA + diphosphate. Its pathway is cofactor biosynthesis; coenzyme A biosynthesis; CoA from (R)-pantothenate: step 4/5. Functionally, reversibly transfers an adenylyl group from ATP to 4'-phosphopantetheine, yielding dephospho-CoA (dPCoA) and pyrophosphate. The sequence is that of Phosphopantetheine adenylyltransferase from Shewanella frigidimarina (strain NCIMB 400).